We begin with the raw amino-acid sequence, 105 residues long: UPF0235 protein RrIowa_1526 (105 aa).

It belongs to the UPF0235 family.

This is UPF0235 protein RrIowa_1526 from Rickettsia rickettsii (strain Iowa).